The chain runs to 1176 residues: Nitrite reductase [NAD(P)H] (1176 aa).

Residues 1–23 form a disordered region; the sequence is MANTSLDMASSTSPSPSPESTTT. Low complexity predominate over residues 10 to 23; that stretch reads SSTSPSPSPESTTT. Position 26 to 60 (26 to 60) interacts with FAD; the sequence is KRIVVVGLGMVGIAFIEKLIKLDTQRQYEIVVIGE. 183 to 215 is a binding site for NAD(+); the sequence is STGVVVGGGLLGLEAAKALMDLQVFGRVVVIER. 4 residues coordinate [2Fe-2S] cluster: Cys496, Cys498, Cys531, and Cys534. Residues Cys717, Cys723, Cys757, and Cys761 each contribute to the [4Fe-4S] cluster site. Cys761 is a siroheme binding site. The 153-residue stretch at 942–1094 folds into the Rieske; atypical domain; the sequence is SYFQGADDLP…VEERDDGMVY (153 aa). Residues Cys981 and His983 each coordinate [2Fe-2S] cluster. 2 stretches are compositionally biased toward low complexity: residues 998 to 1008 and 1030 to 1049; these read PSPSSCSSSAL and PTSS…TNPS. Residues 998-1051 are disordered; sequence PSPSSCSSSALPPSPPSTPPRSSSPVTSPPQSPTSSATPATTASSSCTTNPSGP. Positions 1058 and 1061 each coordinate [2Fe-2S] cluster. The span at 1124–1139 shows a compositional bias: basic and acidic residues; sequence LRELDELNKSKGVEGK. The segment at 1124 to 1157 is disordered; the sequence is LRELDELNKSKGVEGKKGRRGRKPGASEAGKEVG.

It belongs to the nitrite and sulfite reductase 4Fe-4S domain family. Homodimer. The cofactor is siroheme. [4Fe-4S] cluster serves as cofactor. FAD is required as a cofactor. Requires [2Fe-2S] cluster as cofactor.

It carries out the reaction NH4(+) + 3 NADP(+) + 2 H2O = nitrite + 3 NADPH + 5 H(+). The enzyme catalyses NH4(+) + 3 NAD(+) + 2 H2O = nitrite + 3 NADH + 5 H(+). It functions in the pathway nitrogen metabolism; nitrate reduction (assimilation). This is Nitrite reductase [NAD(P)H] (nit-6) from Neurospora crassa (strain ATCC 24698 / 74-OR23-1A / CBS 708.71 / DSM 1257 / FGSC 987).